Consider the following 153-residue polypeptide: UPF0260 protein YcgN (153 aa).

This sequence belongs to the UPF0260 family.

This Salmonella paratyphi B (strain ATCC BAA-1250 / SPB7) protein is UPF0260 protein YcgN.